The chain runs to 256 residues: Small ribosomal subunit protein eS1A (256 aa).

A2 carries the post-translational modification N-acetylalanine; partial.

It belongs to the eukaryotic ribosomal protein eS1 family. In terms of assembly, component of the small ribosomal subunit. Mature ribosomes consist of a small (40S) and a large (60S) subunit. The 40S subunit contains about 33 different proteins and 1 molecule of RNA (18S). The 60S subunit contains about 49 different proteins and 3 molecules of RNA (25S, 5.8S and 5S).

Its subcellular location is the cytoplasm. This Debaryomyces hansenii (strain ATCC 36239 / CBS 767 / BCRC 21394 / JCM 1990 / NBRC 0083 / IGC 2968) (Yeast) protein is Small ribosomal subunit protein eS1A.